Here is a 112-residue protein sequence, read N- to C-terminus: Outer membrane protein assembly factor BamE (112 aa).

The first 19 residues, 1-19, serve as a signal peptide directing secretion; that stretch reads MRCKTLTAAAAVLLMLTAG. Cys20 carries N-palmitoyl cysteine lipidation. A lipid anchor (S-diacylglycerol cysteine) is attached at Cys20.

It belongs to the BamE family. In terms of assembly, part of the Bam complex, which is composed of the outer membrane protein BamA, and four lipoproteins BamB, BamC, BamD and BamE.

It is found in the cell outer membrane. Part of the outer membrane protein assembly complex, which is involved in assembly and insertion of beta-barrel proteins into the outer membrane. In Salmonella typhimurium (strain LT2 / SGSC1412 / ATCC 700720), this protein is Outer membrane protein assembly factor BamE.